The sequence spans 370 residues: Metalloproteinase (370 aa).

The signal sequence occupies residues 1 to 15 (MYLAYIFFLFATVSA). One can recognise a Peptidase M12B domain in the interval 170–370 (IVIEVLLVTD…DNYGKIFRMF (201 aa)). The N-linked (GalNAc...) asparagine glycan is linked to Asn226. His320 contributes to the Zn(2+) binding site. Residue Glu321 is part of the active site. Residues His324 and His330 each coordinate Zn(2+).

The protein belongs to the venom metalloproteinase (M12B) family. In terms of tissue distribution, expressed by the venom gland.

Its subcellular location is the secreted. Functionally, metalloprotease that may disrupt the cell matrix and the process of clotting blood or hemolymph. This Tityus obscurus (Amazonian scorpion) protein is Metalloproteinase.